Consider the following 308-residue polypeptide: Aspartate carbamoyltransferase catalytic subunit (308 aa).

Residues Arg-57 and Thr-58 each coordinate carbamoyl phosphate. Lys-86 serves as a coordination point for L-aspartate. Positions 107, 135, and 138 each coordinate carbamoyl phosphate. Positions 168 and 229 each coordinate L-aspartate. 2 residues coordinate carbamoyl phosphate: Leu-268 and Pro-269.

Belongs to the aspartate/ornithine carbamoyltransferase superfamily. ATCase family. In terms of assembly, heterooligomer of catalytic and regulatory chains.

It catalyses the reaction carbamoyl phosphate + L-aspartate = N-carbamoyl-L-aspartate + phosphate + H(+). The protein operates within pyrimidine metabolism; UMP biosynthesis via de novo pathway; (S)-dihydroorotate from bicarbonate: step 2/3. Functionally, catalyzes the condensation of carbamoyl phosphate and aspartate to form carbamoyl aspartate and inorganic phosphate, the committed step in the de novo pyrimidine nucleotide biosynthesis pathway. The chain is Aspartate carbamoyltransferase catalytic subunit from Pyrococcus furiosus (strain ATCC 43587 / DSM 3638 / JCM 8422 / Vc1).